We begin with the raw amino-acid sequence, 127 residues long: Small ribosomal subunit protein bS6 (127 aa).

Residues 106 to 117 (ERKAQSEKKEAE) are compositionally biased toward basic and acidic residues. Residues 106-127 (ERKAQSEKKEAEVSEGEGGTEA) form a disordered region. The segment covering 118 to 127 (VSEGEGGTEA) has biased composition (acidic residues).

It belongs to the bacterial ribosomal protein bS6 family.

Binds together with bS18 to 16S ribosomal RNA. The protein is Small ribosomal subunit protein bS6 of Thermotoga neapolitana (strain ATCC 49049 / DSM 4359 / NBRC 107923 / NS-E).